Reading from the N-terminus, the 990-residue chain is Type III restriction-modification enzyme StyLTI Res subunit (990 aa).

The helicase-like domain stretch occupies residues 50 to 545 (NIDVKMETGT…GLRLPVDENG (496 aa)). The region spanning 884–970 (LLKYDYPQQV…RQNINVEFAE (87 aa)) is the VRR-NUC domain. The endonuclease domain stretch occupies residues 913-937 (STTPDFVYRIERQDADSVYLLVETK).

It belongs to the type III restriction-modification system Res protein family. In terms of assembly, contains two different subunits: Res and Mod. Mg(2+) serves as cofactor. S-adenosyl-L-methionine is required as a cofactor.

The enzyme catalyses Endonucleolytic cleavage of DNA to give specific double-stranded fragments with terminal 5'-phosphates.. Its function is as follows. A type III restriction enzyme that recognizes 2 inversely oriented double-stranded sequences 5'-CAGAG-3' and cleaves DNA 25-27 base pairs downstream. After binding to one recognition site undergoes random one-dimensional diffusion along DNA until it collides with a stationary enzyme bound to the second DNA site, which is when DNA cleavage occurs. DNA restriction requires both the Res and Mod subunits. In Salmonella typhimurium (strain LT2 / SGSC1412 / ATCC 700720), this protein is Type III restriction-modification enzyme StyLTI Res subunit.